Consider the following 236-residue polypeptide: Pyridoxal 5'-phosphate synthase subunit PdxT (236 aa).

61–63 (GES) serves as a coordination point for L-glutamine. Catalysis depends on cysteine 93, which acts as the Nucleophile. L-glutamine-binding positions include arginine 127 and 163 to 164 (IR). Active-site charge relay system residues include histidine 215 and glutamate 217.

It belongs to the glutaminase PdxT/SNO family. As to quaternary structure, in the presence of PdxS, forms a dodecamer of heterodimers. Only shows activity in the heterodimer.

It carries out the reaction aldehydo-D-ribose 5-phosphate + D-glyceraldehyde 3-phosphate + L-glutamine = pyridoxal 5'-phosphate + L-glutamate + phosphate + 3 H2O + H(+). The enzyme catalyses L-glutamine + H2O = L-glutamate + NH4(+). The protein operates within cofactor biosynthesis; pyridoxal 5'-phosphate biosynthesis. Its function is as follows. Catalyzes the hydrolysis of glutamine to glutamate and ammonia as part of the biosynthesis of pyridoxal 5'-phosphate. The resulting ammonia molecule is channeled to the active site of PdxS. In Arthrobacter sp. (strain FB24), this protein is Pyridoxal 5'-phosphate synthase subunit PdxT.